The sequence spans 440 residues: uncharacterized protein (440 aa).

10 helical membrane-spanning segments follow: residues 26–46, 59–79, 96–116, 138–158, 211–231, 241–261, 263–283, 284–304, 394–414, and 418–438; these read NGLI…SSTF, FVFW…NGVL, FFLG…LKLK, LTLS…SIYL, FLVF…YLFA, LRKP…VGII, WIII…FVIF, WVIK…SLTI, FLII…SVFI, and IVQI…FTFI.

The protein to M.pneumoniae MPN_087.

It is found in the cell membrane. This is an uncharacterized protein from Mycoplasma pneumoniae (strain ATCC 29342 / M129 / Subtype 1) (Mycoplasmoides pneumoniae).